We begin with the raw amino-acid sequence, 545 residues long: Esterase-5C (545 aa).

The N-terminal stretch at 1 to 19 (MLAARLIILLSFYWLSASA) is a signal peptide. Cys-84 and Cys-103 are joined by a disulfide. N-linked (GlcNAc...) asparagine glycosylation occurs at Asn-113. The Acyl-ester intermediate role is filled by Ser-207. Cys-259 and Cys-271 are oxidised to a cystine. The N-linked (GlcNAc...) asparagine glycan is linked to Asn-421. The Charge relay system role is filled by His-467. A glycan (N-linked (GlcNAc...) asparagine) is linked at Asn-507. Cys-515 and Cys-536 form a disulfide bridge.

The protein belongs to the type-B carboxylesterase/lipase family.

It localises to the secreted. It carries out the reaction a carboxylic ester + H2O = an alcohol + a carboxylate + H(+). The sequence is that of Esterase-5C (Est-5C) from Drosophila persimilis (Fruit fly).